A 313-amino-acid chain; its full sequence is MVSYASDVKKELTSLPVHPEHAKAELAAFLRMNGVLSLHDHQFSLDITTENPAIARRIFSLIKTAYGIEPLLIVSKKMKLKKNYQYLVRLQKQVHEILTDLEIFDSNNGLITGIPEKIMSSEQRAMSYLRGAFLASGSVNNPETSRYHLEIYSLYEDHNQDLLKLMNNFFYLNAKETRRRSGYIVYLKEAEKIGDFLHIVGAVNAMLAFEDLRIMRDMRNSVNRLVNCDTANLKKTANAAAKQVEDIQLIEEKFGLENLPEKLTVLARFRLTHPELSLKEVAAQVPDGPISKSGVNHRFQKIREIAKQLKEEN.

The segment at residues 277 to 311 (SLKEVAAQVPDGPISKSGVNHRFQKIREIAKQLKE) is a DNA-binding region (H-T-H motif).

Belongs to the WhiA family.

In terms of biological role, involved in cell division and chromosome segregation. In Lactobacillus johnsonii (strain CNCM I-12250 / La1 / NCC 533), this protein is Probable cell division protein WhiA.